The primary structure comprises 389 residues: MVSVAEIRQAQRAEGPATILAIGTANPANKVEQATYPDFYFKITNSEHKVELKEKFQRMCDKSMIKSRYMYLTEEILKENPSVCEYMAPSLDARQDMVVVEVPRLGKEAAVKAIKEWGQPKSKITHLIFCTTSGVDMPGADYQLTKLLGLRPYVKRYMMYQQGCFAGGTVLRLAKDLAENNKGARVLVVCSEVTAVTFRGPSDTHLDSLVGQALFGDGAAALIVGSDPVPEIEKPIFEMVWTAQTIAPDSEGAIDGHLREAGLTFHLLKDVPGIVSKNIDKALVEAFQPLNISDYNSIFWIAHPGGPAILDQVEQKLALKPEKMKATRDVLSEYGNMSSACVLFILDEMRKKSAQNGLKTTGEGLDWGVLFGFGPGLTIETVVLHSVAI.

The active site involves Cys164.

The protein belongs to the thiolase-like superfamily. Chalcone/stilbene synthases family.

It carries out the reaction (E)-4-coumaroyl-CoA + 3 malonyl-CoA + 3 H(+) = 2',4,4',6'-tetrahydroxychalcone + 3 CO2 + 4 CoA. The protein operates within secondary metabolite biosynthesis; flavonoid biosynthesis. Its function is as follows. The primary product of this enzyme is 4,2',4',6'-tetrahydroxychalcone (also termed naringenin-chalcone or chalcone) which can under specific conditions spontaneously isomerize into naringenin. The sequence is that of Chalcone synthase 5 (CHS5) from Trifolium subterraneum (Subterranean clover).